Here is a 400-residue protein sequence, read N- to C-terminus: S-adenosylmethionine synthase (400 aa).

136–141 (GTGSTD) contacts ATP.

This sequence belongs to the AdoMet synthase 2 family. The cofactor is Mg(2+).

The enzyme catalyses L-methionine + ATP + H2O = S-adenosyl-L-methionine + phosphate + diphosphate. It participates in amino-acid biosynthesis; S-adenosyl-L-methionine biosynthesis; S-adenosyl-L-methionine from L-methionine: step 1/1. In terms of biological role, catalyzes the formation of S-adenosylmethionine from methionine and ATP. This is S-adenosylmethionine synthase from Methanoregula boonei (strain DSM 21154 / JCM 14090 / 6A8).